The chain runs to 359 residues: Trans-enoyl reductase RAP1 (359 aa).

49 to 52 (CDFK) lines the NADP(+) pocket. Substrate is bound at residue 137 to 144 (TCIATACM). NADP(+)-binding positions include 195-198 (SPKN), Tyr-213, and 260-261 (LE). 281 to 285 (GQMIL) contributes to the substrate binding site. 350-351 (VA) contacts NADP(+).

Belongs to the zinc-containing alcohol dehydrogenase family. In terms of assembly, monomer.

It functions in the pathway secondary metabolite biosynthesis. Functionally, trans-enoyl reductase; part of the gene cluster that mediates the biosynthesis of a tyrosine-derived cytochalasan acting as a fungal signal recognized by resistant rice plants and leads to avirulence in Pi33 resistant rice cultivars. The first step in the pathway is catalyzed by the hybrid PKS-NRPS ACE1, assisted by the enoyl reductase RAP1, that are responsible for fusion of the tyrosine precursor and the polyketide backbone. The polyketide synthase module (PKS) of ACE1 is responsible for the synthesis of the polyketide backbone and the downstream nonribosomal peptide synthetase (NRPS) amidates the carboxyl end of the polyketide with the tyrosine precursor. Because ACE1 lacks a designated enoylreductase (ER) domain, the required activity is provided the enoyl reductase RAP1. Reduction by the hydrolyase ORFZ, followed by dehydration and intra-molecular Diels-Alder cyclization by the Diels-Alderase ORF3 then yield the required isoindolone-fused macrocycle. A number of oxidative steps catalyzed by the tailoring enzymes identified within the cluster, including cytochrome P450 monooxygenases CYP1 to CYP4, the FAD-linked oxidoreductase OXR2 and the short-chain dehydrogenase/reductase OXR1, are further required to afford the final cytochalasans that confer avirulence and which have still to be identified. The monooxygenase CYP1 has been shown to be a site-selective C-18 hydroxylase whereas the function of CYP3 is the site-selective epoxidation of the C-6/C-7 olefin that is present in some intermediate compounds. Finally, SYN2 and RAP2 are not required for avirulence in Pi33 resistant rice cultivars. The polypeptide is Trans-enoyl reductase RAP1 (Pyricularia oryzae (strain 70-15 / ATCC MYA-4617 / FGSC 8958) (Rice blast fungus)).